We begin with the raw amino-acid sequence, 432 residues long: Small ribosomal subunit protein uS5m (432 aa).

Residues 110–130 (AGARKGRGKRTKKKKRKDLNR) are disordered. A compositionally biased stretch (basic residues) spans 113 to 127 (RKGRGKRTKKKKRKD). The S5 DRBM domain maps to 220-284 (FDTRILEVRN…NRAIHYLHYI (65 aa)).

The protein belongs to the universal ribosomal protein uS5 family. In terms of assembly, component of the mitochondrial ribosome small subunit (28S) which comprises a 12S rRNA and about 30 distinct proteins.

The protein localises to the mitochondrion. The protein is Small ribosomal subunit protein uS5m (Mrps5) of Mus musculus (Mouse).